Reading from the N-terminus, the 83-residue chain is DNA-directed RNA polymerase subunit omega (83 aa).

The protein belongs to the RNA polymerase subunit omega family. In terms of assembly, the RNAP catalytic core consists of 2 alpha, 1 beta, 1 beta' and 1 omega subunit. When a sigma factor is associated with the core the holoenzyme is formed, which can initiate transcription.

The enzyme catalyses RNA(n) + a ribonucleoside 5'-triphosphate = RNA(n+1) + diphosphate. Promotes RNA polymerase assembly. Latches the N- and C-terminal regions of the beta' subunit thereby facilitating its interaction with the beta and alpha subunits. The polypeptide is DNA-directed RNA polymerase subunit omega (Chromohalobacter salexigens (strain ATCC BAA-138 / DSM 3043 / CIP 106854 / NCIMB 13768 / 1H11)).